A 236-amino-acid chain; its full sequence is Phosphoribosylaminoimidazole-succinocarboxamide synthase (236 aa).

The protein belongs to the SAICAR synthetase family.

It carries out the reaction 5-amino-1-(5-phospho-D-ribosyl)imidazole-4-carboxylate + L-aspartate + ATP = (2S)-2-[5-amino-1-(5-phospho-beta-D-ribosyl)imidazole-4-carboxamido]succinate + ADP + phosphate + 2 H(+). The protein operates within purine metabolism; IMP biosynthesis via de novo pathway; 5-amino-1-(5-phospho-D-ribosyl)imidazole-4-carboxamide from 5-amino-1-(5-phospho-D-ribosyl)imidazole-4-carboxylate: step 1/2. The protein is Phosphoribosylaminoimidazole-succinocarboxamide synthase of Pseudomonas savastanoi pv. phaseolicola (strain 1448A / Race 6) (Pseudomonas syringae pv. phaseolicola (strain 1448A / Race 6)).